We begin with the raw amino-acid sequence, 83 residues long: Kunitz-type serine protease inhibitor homolog beta-bungarotoxin B5 chain (83 aa).

A signal peptide spans 1 to 24; the sequence is MSSGGLLLLLGLLTFCAELTPVSS. The BPTI/Kunitz inhibitor domain maps to 31–81; that stretch reads CNLPPDPGPCHDNKFAFYHHPASNKCKEFVYGGCGGNDNRFKTRNKCQCTC. 3 disulfide bridges follow: cysteine 31-cysteine 81, cysteine 40-cysteine 64, and cysteine 56-cysteine 77.

Belongs to the venom Kunitz-type family. In terms of assembly, heterodimer; disulfide-linked. The A chains have phospholipase A2 activity and the B chains show homology with the basic protease inhibitors. In terms of tissue distribution, expressed by the venom gland.

The protein resides in the secreted. Functionally, beta-bungarotoxins are presynaptic neurotoxins of the venom. The B chain is homologous to venom basic protease inhibitors but has no protease inhibitor activity and blocks voltage-gated potassium channels (Kv). The sequence is that of Kunitz-type serine protease inhibitor homolog beta-bungarotoxin B5 chain from Bungarus multicinctus (Many-banded krait).